A 78-amino-acid polypeptide reads, in one-letter code: Sec-independent protein translocase protein TatA (78 aa).

Residues 1–21 traverse the membrane as a helical segment; it reads MGSLSIWHWIVVVAVILLLFG. Positions 43 to 55 are enriched in basic and acidic residues; sequence MKDDEKTAEKPEP. The disordered stretch occupies residues 43–78; it reads MKDDEKTAEKPEPVKTINHNADGSGAARSDTGSKVI.

Belongs to the TatA/E family. As to quaternary structure, the Tat system comprises two distinct complexes: a TatABC complex, containing multiple copies of TatA, TatB and TatC subunits, and a separate TatA complex, containing only TatA subunits. Substrates initially bind to the TatABC complex, which probably triggers association of the separate TatA complex to form the active translocon.

Its subcellular location is the cell inner membrane. Its function is as follows. Part of the twin-arginine translocation (Tat) system that transports large folded proteins containing a characteristic twin-arginine motif in their signal peptide across membranes. TatA could form the protein-conducting channel of the Tat system. This Nitrobacter winogradskyi (strain ATCC 25391 / DSM 10237 / CIP 104748 / NCIMB 11846 / Nb-255) protein is Sec-independent protein translocase protein TatA.